Here is a 560-residue protein sequence, read N- to C-terminus: Probable 2,3-bisphosphoglycerate-independent phosphoglycerate mutase 2 (560 aa).

An N-acetylglycine modification is found at Gly-2. 2 residues coordinate Mn(2+): Asp-29 and Ser-82. Ser-82 (phosphoserine intermediate) is an active-site residue. Substrate contacts are provided by residues His-141, 171-172, Arg-207, Arg-214, 287-290, and Lys-362; these read RD and RADR. The Mn(2+) site is built by Asp-431, His-435, Asp-472, His-473, and His-502.

It belongs to the BPG-independent phosphoglycerate mutase family. As to quaternary structure, monomer. Mn(2+) is required as a cofactor.

It is found in the cytoplasm. The enzyme catalyses (2R)-2-phosphoglycerate = (2R)-3-phosphoglycerate. It participates in carbohydrate degradation; glycolysis; pyruvate from D-glyceraldehyde 3-phosphate: step 3/5. Functionally, catalyzes the interconversion of 2-phosphoglycerate (2-PGA) and 3-phosphoglycerate (3-PGA). Required for guard cell function (e.g. blue light-, abscisic acid- (ABA), and low CO(2)-regulated stomatal movements) and fertility (e.g. pollen grains production). The polypeptide is Probable 2,3-bisphosphoglycerate-independent phosphoglycerate mutase 2 (PGM2) (Arabidopsis thaliana (Mouse-ear cress)).